Here is a 518-residue protein sequence, read N- to C-terminus: Arrestin-related trafficking adapter 10 (518 aa).

K118 participates in a covalent cross-link: Glycyl lysine isopeptide (Lys-Gly) (interchain with G-Cter in ubiquitin).

This sequence belongs to the ART10 family. Interacts with RSP5. Ubiquitinated by RSP5.

It localises to the cytoplasm. May regulate endocytosis by recruiting RSP5 ubiquitin ligase activity to specific plasma membrane proteins in response to extracellular stimuli. This chain is Arrestin-related trafficking adapter 10 (ART10), found in Saccharomyces cerevisiae (strain Lalvin EC1118 / Prise de mousse) (Baker's yeast).